A 709-amino-acid polypeptide reads, in one-letter code: MGLNLLPIEMDDIRKRLDREPNEIEWRVIDAVWSEHCSYKSSKIFLKSFSIDSPNVIMGIKDWQDAGAVDIGDGWAIVIKVESHNHPSAIDPFNGAATGVGGIIRDIISKGAKPIALMDMIRVGNLKIRKNVWLLKNIIAGIAAYGNSIGVPVVGGELSFDDTYNDNPLVDVAAIGIVRKDKIKPSIVDKAGLKLVLAGLTGIDGLGGASFASRKLSGEDEIGAVQIADPFAGKIILDVTLEIADKVEAIKDLGGGGLAVAVTEMANGLGAIVDIEKIPLRVKNMNPADVIISETQERMLYAVEEKNVEEVCKAFEEYEYPCSVIGEITSEPIIKFRYFGKDLVSLPTNALLEPPKFLWPIKNVRKNVEEKNVDLPLESTIYTVLSHPDLVSKEWVYSQFDYEVNTSTVVKPGDANGAVVSLPNGKLLAIKADGNPDLCSEDAYECGKGIVAEAYRNLATVGARGMVAVDHLQFGDPKKPEVYYTFVEAIRGIGEATRFFNIPIVGGKVSFYNENSQGKPIKPTPLIVMAGLVQGKLLKNRVEDSSYVVLLGYTRKELGGSLLSKIFKVPSQAPKVRLQEDLLSSEVVIDAINEEKITFAKDISRGGLAASLFNIIVHGYGVEISTKSILSDTDNVVENLFSESSGRFVILTNEPEWIVEKSRSKGIVASIIGKVNKKTSILTIDNTDYDLKTIVNNYFNFLEEVIGNG.

The active site involves H36. Residues Y39 and K80 each coordinate ATP. A Mg(2+)-binding site is contributed by E82. Substrate contacts are provided by residues 83 to 86 and R105; that span reads SHNH. H84 (proton acceptor) is an active-site residue. D106 provides a ligand contact to Mg(2+). Q226 is a substrate binding site. Residue D252 coordinates Mg(2+). 294 to 296 lines the substrate pocket; sequence ETQ. D470 and G507 together coordinate ATP. S510 serves as a coordination point for substrate.

It belongs to the FGAMS family. Monomer. Part of the FGAM synthase complex composed of 1 PurL, 1 PurQ and 2 PurS subunits.

It localises to the cytoplasm. The catalysed reaction is N(2)-formyl-N(1)-(5-phospho-beta-D-ribosyl)glycinamide + L-glutamine + ATP + H2O = 2-formamido-N(1)-(5-O-phospho-beta-D-ribosyl)acetamidine + L-glutamate + ADP + phosphate + H(+). The protein operates within purine metabolism; IMP biosynthesis via de novo pathway; 5-amino-1-(5-phospho-D-ribosyl)imidazole from N(2)-formyl-N(1)-(5-phospho-D-ribosyl)glycinamide: step 1/2. In terms of biological role, part of the phosphoribosylformylglycinamidine synthase complex involved in the purines biosynthetic pathway. Catalyzes the ATP-dependent conversion of formylglycinamide ribonucleotide (FGAR) and glutamine to yield formylglycinamidine ribonucleotide (FGAM) and glutamate. The FGAM synthase complex is composed of three subunits. PurQ produces an ammonia molecule by converting glutamine to glutamate. PurL transfers the ammonia molecule to FGAR to form FGAM in an ATP-dependent manner. PurS interacts with PurQ and PurL and is thought to assist in the transfer of the ammonia molecule from PurQ to PurL. The sequence is that of Phosphoribosylformylglycinamidine synthase subunit PurL from Saccharolobus islandicus (strain M.14.25 / Kamchatka #1) (Sulfolobus islandicus).